Reading from the N-terminus, the 396-residue chain is Elongation factor Tu (396 aa).

Residues 10–206 form the tr-type G domain; sequence KPHCNIGTIG…AVDAYIPQPE (197 aa). The G1 stretch occupies residues 19–26; that stretch reads GHVDHGKT. Residue 19 to 26 coordinates GTP; the sequence is GHVDHGKT. A Mg(2+)-binding site is contributed by T26. The tract at residues 60–64 is G2; sequence GITIS. A G3 region spans residues 81–84; that stretch reads DCPG. GTP contacts are provided by residues 81-85 and 136-139; these read DCPGH and NKVD. The G4 stretch occupies residues 136–139; sequence NKVD. Positions 174 to 176 are G5; the sequence is SAL.

The protein belongs to the TRAFAC class translation factor GTPase superfamily. Classic translation factor GTPase family. EF-Tu/EF-1A subfamily. Monomer.

It is found in the cytoplasm. It catalyses the reaction GTP + H2O = GDP + phosphate + H(+). Functionally, GTP hydrolase that promotes the GTP-dependent binding of aminoacyl-tRNA to the A-site of ribosomes during protein biosynthesis. This chain is Elongation factor Tu, found in Gluconacetobacter diazotrophicus (strain ATCC 49037 / DSM 5601 / CCUG 37298 / CIP 103539 / LMG 7603 / PAl5).